The chain runs to 203 residues: Small ribosomal subunit protein uS4 (203 aa).

The S4 RNA-binding domain maps to 93 to 153; sequence QRLDSLVYRL…DKSKNIVPIQ (61 aa).

The protein belongs to the universal ribosomal protein uS4 family. In terms of assembly, part of the 30S ribosomal subunit. Contacts protein S5. The interaction surface between S4 and S5 is involved in control of translational fidelity.

One of the primary rRNA binding proteins, it binds directly to 16S rRNA where it nucleates assembly of the body of the 30S subunit. Functionally, with S5 and S12 plays an important role in translational accuracy. The protein is Small ribosomal subunit protein uS4 of Leuconostoc citreum (strain KM20).